The primary structure comprises 1341 residues: WD repeat-containing protein 19 (1341 aa).

WD repeat units follow at residues 11-51 (SWLG…RSEI), 52-92 (SLPG…TSQL), 95-134 (GMRD…KIPV), 137-175 (KHTK…IRQT), 273-311 (DHKD…DMYA), and 317-356 (DENK…LGDA). TPR repeat units lie at residues 736 to 769 (AQDL…AKRL), 775 to 808 (PFIS…DNKE), 840 to 873 (RVLK…DRAA), 895 to 928 (PKIH…NSVI), 951 to 984 (LDGA…NEAF), and 1020 to 1053 (EKRH…EDNV).

Component of the IFT complex A (IFT-A) complex. IFT-A complex is divided into a core subcomplex composed of IFT122:IFT140:WDR19 which is associated with TULP3 and a peripheral subcomplex composed of IFT43:WDR35:TTC21B. Interacts (via C-terminal region) with IFT122 (via C-terminal region). Interacts with BBS1. Interacts with TTC25. Tissue-specific expression of isoforms. Expressed in the prostate, testis, epididymis, submaxillary and salivary glands. Expressed in ependymal cells lining brain ventricles (at protein level).

The protein localises to the cell projection. It is found in the cilium. The protein resides in the cytoplasm. Its subcellular location is the cytoskeleton. It localises to the cilium basal body. The protein localises to the photoreceptor outer segment. It is found in the flagellum. Functionally, as component of the IFT complex A (IFT-A), a complex required for retrograde ciliary transport and entry into cilia of G protein-coupled receptors (GPCRs), it is involved in cilia function and/or assembly. Essential for functional IFT-A assembly and ciliary entry of GPCRs. Associates with the BBSome complex to mediate ciliary transport. The chain is WD repeat-containing protein 19 from Mus musculus (Mouse).